The sequence spans 255 residues: Pimeloyl-[acyl-carrier protein] methyl ester esterase (255 aa).

The region spanning leucine 16 to glutamate 241 is the AB hydrolase-1 domain. Substrate is bound by residues tryptophan 22, serine 82–leucine 83, and phenylalanine 143–glutamine 147. Serine 82 functions as the Nucleophile in the catalytic mechanism. Residues aspartate 207 and histidine 235 contribute to the active site. Histidine 235 serves as a coordination point for substrate.

It belongs to the AB hydrolase superfamily. Carboxylesterase BioH family. As to quaternary structure, monomer.

The protein resides in the cytoplasm. It catalyses the reaction 6-carboxyhexanoyl-[ACP] methyl ester + H2O = 6-carboxyhexanoyl-[ACP] + methanol + H(+). It functions in the pathway cofactor biosynthesis; biotin biosynthesis. Functionally, the physiological role of BioH is to remove the methyl group introduced by BioC when the pimeloyl moiety is complete. It allows to synthesize pimeloyl-ACP via the fatty acid synthetic pathway through the hydrolysis of the ester bonds of pimeloyl-ACP esters. This is Pimeloyl-[acyl-carrier protein] methyl ester esterase from Vibrio parahaemolyticus serotype O3:K6 (strain RIMD 2210633).